Consider the following 465-residue polypeptide: Methylenetetrahydrofolate--tRNA-(uracil-5-)-methyltransferase TrmFO (465 aa).

Position 3–8 (3–8) interacts with FAD; that stretch reads GAGLAG.

The protein belongs to the MnmG family. TrmFO subfamily. FAD serves as cofactor.

Its subcellular location is the cytoplasm. The enzyme catalyses uridine(54) in tRNA + (6R)-5,10-methylene-5,6,7,8-tetrahydrofolate + NADH + H(+) = 5-methyluridine(54) in tRNA + (6S)-5,6,7,8-tetrahydrofolate + NAD(+). It carries out the reaction uridine(54) in tRNA + (6R)-5,10-methylene-5,6,7,8-tetrahydrofolate + NADPH + H(+) = 5-methyluridine(54) in tRNA + (6S)-5,6,7,8-tetrahydrofolate + NADP(+). Functionally, catalyzes the folate-dependent formation of 5-methyl-uridine at position 54 (M-5-U54) in all tRNAs. The sequence is that of Methylenetetrahydrofolate--tRNA-(uracil-5-)-methyltransferase TrmFO from Bradyrhizobium sp. (strain BTAi1 / ATCC BAA-1182).